A 427-amino-acid polypeptide reads, in one-letter code: 3-phosphoshikimate 1-carboxyvinyltransferase (427 aa).

Positions 23, 24, and 28 each coordinate 3-phosphoshikimate. Residue K23 participates in phosphoenolpyruvate binding. Residues G97 and R125 each coordinate phosphoenolpyruvate. S169, S170, Q171, S197, D313, N336, and K340 together coordinate 3-phosphoshikimate. Position 171 (Q171) interacts with phosphoenolpyruvate. The active-site Proton acceptor is the D313. The phosphoenolpyruvate site is built by R344, R386, and K411.

Belongs to the EPSP synthase family. Monomer.

The protein resides in the cytoplasm. The enzyme catalyses 3-phosphoshikimate + phosphoenolpyruvate = 5-O-(1-carboxyvinyl)-3-phosphoshikimate + phosphate. It participates in metabolic intermediate biosynthesis; chorismate biosynthesis; chorismate from D-erythrose 4-phosphate and phosphoenolpyruvate: step 6/7. Catalyzes the transfer of the enolpyruvyl moiety of phosphoenolpyruvate (PEP) to the 5-hydroxyl of shikimate-3-phosphate (S3P) to produce enolpyruvyl shikimate-3-phosphate and inorganic phosphate. This Yersinia ruckeri protein is 3-phosphoshikimate 1-carboxyvinyltransferase.